A 326-amino-acid chain; its full sequence is ATP synthase subunit b 2 (326 aa).

A helical membrane pass occupies residues 2–22; the sequence is LIDWFTVVAQALNFLILVWLL. 2 stretches are compositionally biased toward basic and acidic residues: residues 275–298 and 306–326; these read QQGR…RKEN and PPPE…IGSP. Residues 275–326 form a disordered region; the sequence is QQGRKEGRAVQNWDKAESEIRKENLSPAKTEPPPEAKAKPKPEEPKPEIGSP.

This sequence belongs to the ATPase B chain family. F-type ATPases have 2 components, F(1) - the catalytic core - and F(0) - the membrane proton channel. F(1) has five subunits: alpha(3), beta(3), gamma(1), delta(1), epsilon(1). F(0) has three main subunits: a(1), b(2) and c(10-14). The alpha and beta chains form an alternating ring which encloses part of the gamma chain. F(1) is attached to F(0) by a central stalk formed by the gamma and epsilon chains, while a peripheral stalk is formed by the delta and b chains.

It localises to the cell inner membrane. In terms of biological role, f(1)F(0) ATP synthase produces ATP from ADP in the presence of a proton or sodium gradient. F-type ATPases consist of two structural domains, F(1) containing the extramembraneous catalytic core and F(0) containing the membrane proton channel, linked together by a central stalk and a peripheral stalk. During catalysis, ATP synthesis in the catalytic domain of F(1) is coupled via a rotary mechanism of the central stalk subunits to proton translocation. Functionally, component of the F(0) channel, it forms part of the peripheral stalk, linking F(1) to F(0). The polypeptide is ATP synthase subunit b 2 (Albidiferax ferrireducens (strain ATCC BAA-621 / DSM 15236 / T118) (Rhodoferax ferrireducens)).